The following is a 468-amino-acid chain: Replication factor C large subunit (468 aa).

50–57 contacts ATP; it reads GPPGSGKT. Residues 422–456 form a disordered region; sequence EEKAVEEKVEEEEAEEEEEEERKEEEKPKAEKKKG. Acidic residues predominate over residues 429–444; sequence KVEEEEAEEEEEEERK.

It belongs to the activator 1 small subunits family. RfcL subfamily. As to quaternary structure, heteromultimer composed of small subunits (RfcS) and large subunits (RfcL).

Part of the RFC clamp loader complex which loads the PCNA sliding clamp onto DNA. The polypeptide is Replication factor C large subunit (Pyrococcus horikoshii (strain ATCC 700860 / DSM 12428 / JCM 9974 / NBRC 100139 / OT-3)).